The following is a 208-amino-acid chain: Thymidylate kinase (208 aa).

10-17 lines the ATP pocket; it reads GPDGSGKT.

It belongs to the thymidylate kinase family.

It carries out the reaction dTMP + ATP = dTDP + ADP. Phosphorylation of dTMP to form dTDP in both de novo and salvage pathways of dTTP synthesis. This chain is Thymidylate kinase, found in Listeria monocytogenes serotype 4a (strain HCC23).